The primary structure comprises 370 residues: Lipoyl synthase 1, chloroplastic (370 aa).

2 disordered regions span residues 1-25 (MMQS…PVCR) and 39-67 (EAAP…KKPA). The transit peptide at 1 to 37 (MMQSSLARPLPRPPIRPACGNPVCRSRPGSVSVARCR) directs the protein to the chloroplast. Residues Cys-95, Cys-100, Cys-106, Cys-132, Cys-136, Cys-139, and Ser-347 each coordinate [4Fe-4S] cluster. In terms of domain architecture, Radical SAM core spans 115-336 (GEGDGIATAT…KEYGESVGFR (222 aa)).

Belongs to the radical SAM superfamily. Lipoyl synthase family. The cofactor is [4Fe-4S] cluster.

It localises to the plastid. The protein localises to the chloroplast. It carries out the reaction [[Fe-S] cluster scaffold protein carrying a second [4Fe-4S](2+) cluster] + N(6)-octanoyl-L-lysyl-[protein] + 2 oxidized [2Fe-2S]-[ferredoxin] + 2 S-adenosyl-L-methionine + 4 H(+) = [[Fe-S] cluster scaffold protein] + N(6)-[(R)-dihydrolipoyl]-L-lysyl-[protein] + 4 Fe(3+) + 2 hydrogen sulfide + 2 5'-deoxyadenosine + 2 L-methionine + 2 reduced [2Fe-2S]-[ferredoxin]. Its pathway is protein modification; protein lipoylation via endogenous pathway; protein N(6)-(lipoyl)lysine from octanoyl-[acyl-carrier-protein]: step 2/2. Catalyzes the radical-mediated insertion of two sulfur atoms into the C-6 and C-8 positions of the octanoyl moiety bound to the lipoyl domains of lipoate-dependent enzymes, thereby converting the octanoylated domains into lipoylated derivatives. In Oryza sativa subsp. indica (Rice), this protein is Lipoyl synthase 1, chloroplastic.